The sequence spans 127 residues: Aspartate 1-decarboxylase (127 aa).

The Schiff-base intermediate with substrate; via pyruvic acid role is filled by serine 25. A Pyruvic acid (Ser) modification is found at serine 25. Threonine 57 lines the substrate pocket. Tyrosine 58 serves as the catalytic Proton donor. 73–75 (GAA) serves as a coordination point for substrate.

This sequence belongs to the PanD family. In terms of assembly, heterooctamer of four alpha and four beta subunits. Pyruvate serves as cofactor. In terms of processing, is synthesized initially as an inactive proenzyme, which is activated by self-cleavage at a specific serine bond to produce a beta-subunit with a hydroxyl group at its C-terminus and an alpha-subunit with a pyruvoyl group at its N-terminus.

The protein resides in the cytoplasm. The enzyme catalyses L-aspartate + H(+) = beta-alanine + CO2. It functions in the pathway cofactor biosynthesis; (R)-pantothenate biosynthesis; beta-alanine from L-aspartate: step 1/1. Its function is as follows. Catalyzes the pyruvoyl-dependent decarboxylation of aspartate to produce beta-alanine. This Bacillus cereus (strain B4264) protein is Aspartate 1-decarboxylase.